The following is a 431-amino-acid chain: Large envelope protein (431 aa).

Glycine 2 carries the N-myristoyl glycine; by host lipid modification. Residues 2 to 148 (GNNIKVTFNP…PPLRDTHPHL (147 aa)) are pre-S1. The tract at residues 2 to 207 (GNNIKVTFNP…PSTTGDPALS (206 aa)) is pre-S. At 2–214 (GNNIKVTFNP…ALSPEMSPSS (213 aa)) the chain is on the virion surface; in external conformation side. The Intravirion; in internal conformation portion of the chain corresponds to 2–286 (GNNIKVTFNP…NGFRWMYLRR (285 aa)). The N-linked (GlcNAc...) asparagine glycan is linked to asparagine 3. Residues 115-147 (IPRGLVPPQTPTNRDQGRKPTPPTPPLRDTHPH) are disordered. A pre-S2 region spans residues 149–207 (TMKNQTFHLQGFVDGLRDLTTTERQHNAYGDPFTTLSPAVPTVSTILSPPSTTGDPALS). The chain crosses the membrane as a helical span at residues 215 to 235 (LLGLLAGLQVVYFLWTKILTI). Residues 236–286 (AQNLDWWWTSLSFPGGIPECTGQNSQFQTCKHLPTSCPPTCNGFRWMYLRR) lie on the Intravirion; in external conformation side of the membrane. A helical membrane pass occupies residues 287–307 (FIIYLLVLLLCLIFLLVLLDW). Topologically, residues 308–379 (KGFIPVCPLQ…WALARFSWLN (72 aa)) are virion surface. N-linked (GlcNAc...) asparagine; by host glycosylation is present at asparagine 351. The helical transmembrane segment at 380–400 (LLVPLLQWLGGISLIAWFLLI) threads the bilayer. The Intravirion segment spans residues 401–406 (WMIWFW). A helical membrane pass occupies residues 407–429 (GPALLSILPPFIPIFVLFFLIWV). Residues 430–431 (YI) are Virion surface-facing.

Belongs to the orthohepadnavirus major surface antigen family. In its internal form (Li-HBsAg), interacts with the capsid protein and with the isoform S. Interacts with host chaperone CANX. As to quaternary structure, associates with host chaperone CANX through its pre-S2 N glycan; this association may be essential for isoform M proper secretion. In terms of assembly, interacts with isoform L. Interacts with the antigens of satellite virus HDV (HDVAgs); this interaction is required for encapsidation of HDV genomic RNA. Isoform M is N-terminally acetylated by host at a ratio of 90%, and N-glycosylated by host at the pre-S2 region. Post-translationally, myristoylated.

Its subcellular location is the virion membrane. Its function is as follows. The large envelope protein exists in two topological conformations, one which is termed 'external' or Le-HBsAg and the other 'internal' or Li-HBsAg. In its external conformation the protein attaches the virus to cell receptors and thereby initiating infection. This interaction determines the species specificity and liver tropism. This attachment induces virion internalization predominantly through caveolin-mediated endocytosis. The large envelope protein also assures fusion between virion membrane and endosomal membrane. In its internal conformation the protein plays a role in virion morphogenesis and mediates the contact with the nucleocapsid like a matrix protein. The middle envelope protein plays an important role in the budding of the virion. It is involved in the induction of budding in a nucleocapsid independent way. In this process the majority of envelope proteins bud to form subviral lipoprotein particles of 22 nm of diameter that do not contain a nucleocapsid. The chain is Large envelope protein from Marmota monax (Woodchuck).